Consider the following 466-residue polypeptide: Serine/threonine-protein kinase SSN3 (466 aa).

The region spanning 32–396 is the Protein kinase domain; it reads YKILGFISSG…ARDALRHPWF (365 aa). 38–46 contacts ATP; sequence ISSGTYGRV. Residues 58 to 105 are disordered; it reads ASAKSALPSSTRAALSLPKDKLPSPSFTEDSDPLNNPEMCMRPGDRPA. An ATP-binding site is contributed by Lys114. Asp216 functions as the Proton acceptor in the catalytic mechanism. The tract at residues 421-466 is disordered; the sequence is THEDNGDAKMGSLPQSMAGGRLPSSSNFRPASGNIVQPAARKKARI.

It belongs to the protein kinase superfamily. CMGC Ser/Thr protein kinase family. CDC2/CDKX subfamily. In terms of assembly, component of the SRB8-11 complex, a regulatory module of the Mediator complex. Requires Mg(2+) as cofactor.

Its subcellular location is the nucleus. It carries out the reaction L-seryl-[protein] + ATP = O-phospho-L-seryl-[protein] + ADP + H(+). The catalysed reaction is L-threonyl-[protein] + ATP = O-phospho-L-threonyl-[protein] + ADP + H(+). It catalyses the reaction [DNA-directed RNA polymerase] + ATP = phospho-[DNA-directed RNA polymerase] + ADP + H(+). Functionally, component of the SRB8-11 complex. The SRB8-11 complex is a regulatory module of the Mediator complex which is itself involved in regulation of basal and activated RNA polymerase II-dependent transcription. The SRB8-11 complex may be involved in the transcriptional repression of a subset of genes regulated by Mediator. It may inhibit the association of the Mediator complex with RNA polymerase II to form the holoenzyme complex. The SRB8-11 complex phosphorylates the C-terminal domain (CTD) of the largest subunit of RNA polymerase II. This chain is Serine/threonine-protein kinase SSN3 (SSN3), found in Cryptococcus neoformans var. neoformans serotype D (strain B-3501A) (Filobasidiella neoformans).